We begin with the raw amino-acid sequence, 159 residues long: Ribosomal RNA large subunit methyltransferase H (159 aa).

S-adenosyl-L-methionine-binding positions include Leu76, Gly108, and Leu127–Phe132.

Belongs to the RNA methyltransferase RlmH family. Homodimer.

Its subcellular location is the cytoplasm. It carries out the reaction pseudouridine(1915) in 23S rRNA + S-adenosyl-L-methionine = N(3)-methylpseudouridine(1915) in 23S rRNA + S-adenosyl-L-homocysteine + H(+). In terms of biological role, specifically methylates the pseudouridine at position 1915 (m3Psi1915) in 23S rRNA. The chain is Ribosomal RNA large subunit methyltransferase H from Syntrophomonas wolfei subsp. wolfei (strain DSM 2245B / Goettingen).